A 121-amino-acid polypeptide reads, in one-letter code: Large ribosomal subunit protein uL24 (121 aa).

Residues 1–23 (MVRIESSQPRKQRKARYDAPSHM) are disordered.

The protein belongs to the universal ribosomal protein uL24 family. Part of the 50S ribosomal subunit.

One of two assembly initiator proteins, it binds directly to the 5'-end of the 23S rRNA, where it nucleates assembly of the 50S subunit. Its function is as follows. Located at the polypeptide exit tunnel on the outside of the subunit. The chain is Large ribosomal subunit protein uL24 from Methanoregula boonei (strain DSM 21154 / JCM 14090 / 6A8).